A 129-amino-acid polypeptide reads, in one-letter code: Large ribosomal subunit protein uL22 (129 aa).

The protein belongs to the universal ribosomal protein uL22 family. In terms of assembly, part of the 50S ribosomal subunit.

In terms of biological role, this protein binds specifically to 23S rRNA; its binding is stimulated by other ribosomal proteins, e.g. L4, L17, and L20. It is important during the early stages of 50S assembly. It makes multiple contacts with different domains of the 23S rRNA in the assembled 50S subunit and ribosome. The globular domain of the protein is located near the polypeptide exit tunnel on the outside of the subunit, while an extended beta-hairpin is found that lines the wall of the exit tunnel in the center of the 70S ribosome. This Onion yellows phytoplasma (strain OY-M) protein is Large ribosomal subunit protein uL22.